A 253-amino-acid polypeptide reads, in one-letter code: Neurotrophin-3 (253 aa).

An N-terminal signal peptide occupies residues 1-18 (MSILFYVMFLAYLRGVQG). Residues 19–134 (NSMDQRSLPE…AANRTSRRKR (116 aa)) constitute a propeptide that is removed on maturation. The disordered stretch occupies residues 62–89 (TLPKAEAPPREPAKSEFQPVTAMGPELL). An N-linked (GlcNAc...) asparagine glycan is attached at Asn127. Cystine bridges form between Cys148–Cys213, Cys191–Cys242, and Cys201–Cys244.

It belongs to the NGF-beta family.

It is found in the secreted. Its function is as follows. Seems to promote the survival of visceral and proprioceptive sensory neurons. The protein is Neurotrophin-3 (NTF3) of Bos taurus (Bovine).